Consider the following 303-residue polypeptide: uncharacterized protein (303 aa).

The 128-residue stretch at 173-300 (KLPELLGQLN…RFTVNGWIRK (128 aa)) folds into the Fe2OG dioxygenase domain.

Fe(2+) is required as a cofactor. It depends on L-ascorbate as a cofactor.

This is an uncharacterized protein from Synechocystis sp. (strain ATCC 27184 / PCC 6803 / Kazusa).